A 157-amino-acid chain; its full sequence is Putative dehydration-responsive element-binding protein 2H (157 aa).

Positions Arg-5–Arg-21 match the Nuclear localization signal motif. Residues Ala-29–Lys-57 are disordered. The span at Pro-40 to Met-54 shows a compositional bias: basic residues. Residues Asp-66 to Pro-123 constitute a DNA-binding region (AP2/ERF).

Belongs to the AP2/ERF transcription factor family. ERF subfamily.

It localises to the nucleus. Putative transcriptional activator that binds specifically to the DNA sequence 5'-[AG]CCGAC-3'. This is Putative dehydration-responsive element-binding protein 2H (DREB2H) from Arabidopsis thaliana (Mouse-ear cress).